The primary structure comprises 437 residues: Major royal jelly protein 6 (437 aa).

Residues 1–20 (MTNWLLLIVCLSIACQDVTS) form the signal peptide. Asparagine 78, asparagine 164, asparagine 181, asparagine 201, and asparagine 324 each carry an N-linked (GlcNAc...) asparagine glycan.

This sequence belongs to the major royal jelly protein family. Found in and secreted from the hypopharyngeal glands of the worker honey bee (at protein level); expression peaks at 20 days post eclosion. Expressed in the spermatheca of adult queen bees (at protein level); Expression levels are higher in mated queens than in virgin queens. Expressed at low level in the brains of adult worker bees. Protein abundance does not seem to correlate with transcript abundance.

The protein localises to the secreted. In terms of biological role, component of royal jelly, a substance produced in the hypopharyngeal gland containing proteins, free amino acids, fatty acids, sugars and other nutrients, which is fed to developing larvae by worker nurse bees. All larvae are fed some royal jelly (also known as worker jelly) early in their development but it forms the principal source of nutrition for larvae destined to become queen bees. Produced in the spermatheca of adult queen bees, along with other major royal jelly proteins, where it may act as a nutrient supply for sperm stored by mated queens, or be involved in energy metabolism. The sequence is that of Major royal jelly protein 6 from Apis mellifera (Honeybee).